The following is an 836-amino-acid chain: Hypoxia-inducible factor 1-alpha (836 aa).

The tract at residues 1–30 is disordered; that stretch reads MEGAGGENEKKKMSSERRKEKSRDAARSRR. The segment at 1-401 is interaction with TSGA10; that stretch reads MEGAGGENEK…KEPDALTLLA (401 aa). A compositionally biased stretch (basic and acidic residues) spans 7–30; sequence ENEKKKMSSERRKEKSRDAARSRR. Residues 17 to 70 enclose the bHLH domain; that stretch reads RRKEKSRDAARSRRSKESEVFYELAHQLPLPHNVSSHLDKASVMRLTISYLRVR. The tract at residues 21–30 is DNA-binding; it reads KSRDAARSRR. The 76-residue stretch at 80–155 folds into the PAS 1 domain; that stretch reads SEDEMKAQMD…EMLTHRNGPV (76 aa). Residues 170–191 form a required for heterodimer formation with ARNT region; the sequence is RMKCTLTSRGRTMNIKSATWKV. In terms of domain architecture, PAS 2 spans 228 to 298; it reads PHPSNIEIPL…KTHHDMFTKG (71 aa). Ser247 is subject to Phosphoserine; by CK1. In terms of domain architecture, PAC spans 302–345; it reads TGQYRMLAKRGGYVWVETQATVIYNTKNSQPQCIVCVNYVVSGI. An N-terminal VHL recognition site region spans residues 380 to 417; that stretch reads SEDTSCLFDKLKKEPDALTLLAPAAGDTIISLDFGSDD. Lys391 participates in a covalent cross-link: Glycyl lysine isopeptide (Lys-Gly) (interchain with G-Cter in SUMO). Residues 401–613 are ODD; the sequence is APAAGDTIIS…PSMSTVTGFQ (213 aa). Pro402 carries the 4-hydroxyproline modification. Residue Lys476 forms a Glycyl lysine isopeptide (Lys-Gly) (interchain with G-Cter in SUMO) linkage. The segment at 492-511 is disordered; it reads QIQDQPASPSDGSTRQSSPE. The segment at 544 to 588 is NTAD; sequence FKLELVEKLFAEDTEAKNPFSTQDTDLDLEMLAPYIPMDDDFQLR. An N6-acetyllysine; alternate modification is found at Lys545. Residues Lys545, Lys551, and Lys560 each participate in a glycyl lysine isopeptide (Lys-Gly) (interchain with G-Cter in ubiquitin) cross-link. Lys545 participates in a covalent cross-link: Glycyl lysine isopeptide (Lys-Gly) (interchain with G-Cter in ubiquitin); alternate. The residue at position 564 (Ser564) is a Phosphoserine; by GSK3-beta. Thr568 is subject to Phosphothreonine; by GSK3-beta. The tract at residues 569–585 is C-terminal VHL recognition site; the sequence is DLDLEMLAPYIPMDDDF. The residue at position 577 (Pro577) is a 4-hydroxyproline. Position 589 is a phosphoserine; by PLK3 (Ser589). Residues 589–795 form an ID region; that stretch reads SFDQLSPLES…SDLACRLLGQ (207 aa). Disordered regions lie at residues 593-684 and 707-734; these read LSPL…DRAG and QRNT…KMEH. Phosphoserine; by GSK3-beta is present on Ser602. The segment covering 608–620 has biased composition (polar residues); that stretch reads TVTGFQQTQLQKP. The segment covering 621–632 has biased composition (low complexity); it reads TITATATTTATT. Residues 633-647 show a composition bias toward basic and acidic residues; it reads DESKTETKDNKEDIK. Over residues 652 to 678 the composition is skewed to polar residues; the sequence is SPSSTQVPQETTTAKASAYSGTHSRTA. At Ser668 the chain carries Phosphoserine; by PLK3. Residue Lys719 is modified to N6-acetyllysine. Positions 728–731 match the Nuclear localization signal motif; that stretch reads RKRK. The CTAD stretch occupies residues 796 to 836; sequence SMDESGLPQLTSYDCEVNAPIQGSRNLLQGEELLRALDQVN. An S-nitrosocysteine modification is found at Cys810. Asn813 is subject to (3S)-3-hydroxyasparagine.

Interacts with the ARNT; forms a heterodimer that binds core DNA sequence 5'-TACGTG-3' within the hypoxia response element (HRE) of target gene promoters. Interacts with COPS5; the interaction increases the transcriptional activity of HIF1A through increased stability. Interacts with EP300 (via TAZ-type 1 domains); the interaction is stimulated in response to hypoxia and inhibited by CITED2. Interacts with CREBBP (via TAZ-type 1 domains). Interacts with NCOA1, NCOA2, APEX1 and HSP90. Interacts (hydroxylated within the ODD domain) with VHLL (via beta domain); the interaction, leads to polyubiquitination and subsequent HIF1A proteasomal degradation. During hypoxia, sumoylated HIF1A also binds VHL; the interaction promotes the ubiquitination of HIF1A. Interacts with SENP1; the interaction desumoylates HIF1A resulting in stabilization and activation of transcription. Interacts (via the ODD domain) with NAA10; the interaction appears not to acetylate HIF1A nor have any affect on protein stability, during hypoxia. Interacts with RWDD3; the interaction enhances HIF1A sumoylation. Interacts with TSGA10. Interacts with HIF3A. Interacts with RORA (via the DNA binding domain); the interaction enhances HIF1A transcription under hypoxia through increasing protein stability. Interaction with PSMA7 inhibits the transactivation activity of HIF1A under both normoxic and hypoxia-mimicking conditions. Interacts with USP20. Interacts with RACK1; promotes HIF1A ubiquitination and proteasome-mediated degradation. Interacts (via N-terminus) with USP19. Interacts with SIRT2. Interacts (deacetylated form) with EGLN1. Interacts with CBFA2T3. Interacts with HSP90AA1 and HSP90AB1. Interacts with DCUN1D1; this interaction increases the interaction between VHL and DCUN1D1. Interacts with HIF1AN. Post-translationally, S-nitrosylation of Cys-810 may be responsible for increased recruitment of p300 coactivator necessary for transcriptional activity of HIF-1 complex. Requires phosphorylation for DNA-binding. Phosphorylation at Ser-247 by CSNK1D/CK1 represses kinase activity and impairs ARNT binding. Phosphorylation by GSK3-beta and PLK3 promote degradation by the proteasome. In terms of processing, sumoylated; with SUMO1 under hypoxia. Sumoylation is enhanced through interaction with RWDD3. Both sumoylation and desumoylation seem to be involved in the regulation of its stability during hypoxia. Sumoylation can promote either its stabilization or its VHL-dependent degradation by promoting hydroxyproline-independent HIF1A-VHL complex binding, thus leading to HIF1A ubiquitination and proteasomal degradation. Desumoylation by SENP1 increases its stability amd transcriptional activity. There is a disaccord between various publications on the effect of sumoylation and desumoylation on its stability and transcriptional activity. Post-translationally, acetylation of Lys-545 by ARD1 increases interaction with VHL and stimulates subsequent proteasomal degradation. Deacetylation of Lys-719 by SIRT2 increases its interaction with and hydroxylation by EGLN1 thereby inactivating HIF1A activity by inducing its proteasomal degradation. Ubiquitinated; in normoxia, following hydroxylation and interaction with VHL. Lys-545 appears to be the principal site of ubiquitination. Clioquinol, the Cu/Zn-chelator, inhibits ubiquitination through preventing hydroxylation at Asn-813. Ubiquitinated by E3 ligase VHL. Deubiquitinated by UCHL1. In terms of processing, the iron and 2-oxoglutarate dependent 3-hydroxylation of asparagine is (S) stereospecific within HIF CTAD domains. Post-translationally, in normoxia, is hydroxylated on Pro-402 and Pro-577 in the oxygen-dependent degradation domain (ODD) by EGLN1/PHD2 and EGLN2/PHD1. EGLN3/PHD3 has also been shown to hydroxylate Pro-577. The hydroxylated prolines promote interaction with VHL, initiating rapid ubiquitination and subsequent proteasomal degradation. Deubiquitinated by USP20. Under hypoxia, proline hydroxylation is impaired and ubiquitination is attenuated, resulting in stabilization. In normoxia, is hydroxylated on Asn-813 by HIF1AN, thus abrogating interaction with CREBBP and EP300 and preventing transcriptional activation. Repressed by iron ion, via Fe(2+) prolyl hydroxylase (PHD) enzymes-mediated hydroxylation and subsequent proteasomal degradation. As to expression, ubiquitous.

The protein localises to the cytoplasm. It localises to the nucleus. Its subcellular location is the nucleus speckle. Induced by reactive oxygen species (ROS). Its function is as follows. Functions as a master transcriptional regulator of the adaptive response to hypoxia. Under hypoxic conditions, activates the transcription of over 40 genes, including erythropoietin, glucose transporters, glycolytic enzymes, vascular endothelial growth factor, HILPDA, and other genes whose protein products increase oxygen delivery or facilitate metabolic adaptation to hypoxia. Plays an essential role in embryonic vascularization, tumor angiogenesis and pathophysiology of ischemic disease. Heterodimerizes with ARNT; heterodimer binds to core DNA sequence 5'-TACGTG-3' within the hypoxia response element (HRE) of target gene promoters. Activation requires recruitment of transcriptional coactivators such as CREBBP and EP300. Activity is enhanced by interaction with NCOA1 and/or NCOA2. Interaction with redox regulatory protein APEX1 seems to activate CTAD and potentiates activation by NCOA1 and CREBBP. Involved in the axonal distribution and transport of mitochondria in neurons during hypoxia. The protein is Hypoxia-inducible factor 1-alpha (Hif1a) of Mus musculus (Mouse).